A 332-amino-acid chain; its full sequence is Probable cytosolic iron-sulfur protein assembly protein 1 (332 aa).

WD repeat units lie at residues 9–48 (GHTD…LVTT), 52–93 (GHNR…WQFL), 98–137 (GHEN…DEFE), 144–183 (DHTQ…WICV), 188–230 (GHES…GGTG), 257–295 (AHTR…QWVV), and 302–332 (AHGV…IWEV).

This sequence belongs to the WD repeat CIA1 family. In terms of assembly, interacts with NAR1.

It is found in the cytoplasm. Its subcellular location is the nucleus. Its function is as follows. Essential component of the cytosolic iron-sulfur (Fe/S) protein assembly machinery. Required for the maturation of extramitochondrial Fe/S proteins. The polypeptide is Probable cytosolic iron-sulfur protein assembly protein 1 (Yarrowia lipolytica (strain CLIB 122 / E 150) (Yeast)).